The primary structure comprises 397 residues: Cysteine protease ATG4A (397 aa).

Residue Cys-79 is the Nucleophile of the active site. Active-site residues include Asp-279 and His-281. The LIR motif lies at 392 to 395; that stretch reads FEIL.

It belongs to the peptidase C54 family.

The protein resides in the cytoplasm. It catalyses the reaction [protein]-C-terminal L-amino acid-glycyl-phosphatidylethanolamide + H2O = [protein]-C-terminal L-amino acid-glycine + a 1,2-diacyl-sn-glycero-3-phosphoethanolamine. Functionally, cysteine protease that plays a key role in autophagy by mediating both proteolytic activation and delipidation of ATG8 family proteins. The protease activity is required for proteolytic activation of ATG8 family proteins: cleaves the C-terminal amino acid of ATG8 proteins to reveal a C-terminal glycine. Exposure of the glycine at the C-terminus is essential for ATG8 proteins conjugation to phosphatidylethanolamine (PE) and insertion to membranes, which is necessary for autophagy. Protease activity is also required to counteract formation of high-molecular weight conjugates of ATG8 proteins (ATG8ylation): acts as a deubiquitinating-like enzyme that removes ATG8 conjugated to other proteins, such as ATG3. In addition to the protease activity, also mediates delipidation of ATG8 family proteins. Catalyzes delipidation of PE-conjugated forms of ATG8 proteins during macroautophagy. This chain is Cysteine protease ATG4A, found in Xenopus laevis (African clawed frog).